Here is a 312-residue protein sequence, read N- to C-terminus: DNA-directed RNA polymerase subunit alpha (312 aa).

The alpha N-terminal domain (alpha-NTD) stretch occupies residues 1–226 (MIEFEKPIIT…EHLNLFTDLT (226 aa)). Residues 243-312 (DEKVLDRTIE…DLGLGLKNDK (70 aa)) are alpha C-terminal domain (alpha-CTD).

The protein belongs to the RNA polymerase alpha chain family. Homodimer. The RNAP catalytic core consists of 2 alpha, 1 beta, 1 beta' and 1 omega subunit. When a sigma factor is associated with the core the holoenzyme is formed, which can initiate transcription.

It carries out the reaction RNA(n) + a ribonucleoside 5'-triphosphate = RNA(n+1) + diphosphate. DNA-dependent RNA polymerase catalyzes the transcription of DNA into RNA using the four ribonucleoside triphosphates as substrates. This chain is DNA-directed RNA polymerase subunit alpha, found in Streptococcus pyogenes serotype M3 (strain ATCC BAA-595 / MGAS315).